The primary structure comprises 616 residues: Proline--tRNA ligase (616 aa).

It belongs to the class-II aminoacyl-tRNA synthetase family. ProS type 1 subfamily. As to quaternary structure, homodimer.

It is found in the cytoplasm. The catalysed reaction is tRNA(Pro) + L-proline + ATP = L-prolyl-tRNA(Pro) + AMP + diphosphate. Its function is as follows. Catalyzes the attachment of proline to tRNA(Pro) in a two-step reaction: proline is first activated by ATP to form Pro-AMP and then transferred to the acceptor end of tRNA(Pro). As ProRS can inadvertently accommodate and process non-cognate amino acids such as alanine and cysteine, to avoid such errors it has two additional distinct editing activities against alanine. One activity is designated as 'pretransfer' editing and involves the tRNA(Pro)-independent hydrolysis of activated Ala-AMP. The other activity is designated 'posttransfer' editing and involves deacylation of mischarged Ala-tRNA(Pro). The misacylated Cys-tRNA(Pro) is not edited by ProRS. This is Proline--tRNA ligase from Lactococcus lactis subsp. cremoris (strain MG1363).